The following is a 366-amino-acid chain: Isocitrate dehydrogenase [NAD] subunit alpha, mitochondrial (366 aa).

A mitochondrion-targeting transit peptide spans 1 to 27; that stretch reads MAGSAWVSKVSRLLGAFHNTKQVTRGF. Residue K77 is modified to N6-succinyllysine. A Phosphothreonine modification is found at T101. The substrate site is built by R115, R125, and R146. K223 is modified (N6-acetyllysine). Mg(2+) contacts are provided by D233, D257, and D261. The residue at position 343 (K343) is an N6-acetyllysine; alternate. An N6-succinyllysine; alternate modification is found at K343. Position 350 is an N6-succinyllysine (K350).

The protein belongs to the isocitrate and isopropylmalate dehydrogenases family. In terms of assembly, heterooligomer of subunits alpha (IDH3A), beta (IDH3B), and gamma (IDH3G) in the apparent ratio of 2:1:1. The heterodimer containing one IDH3A and one IDH3B subunit and the heterodimer containing one IDH3A and one IDH3G subunit assemble into a heterotetramer (which contains two subunits of IDH3A, one of IDH3B and one of IDH3G) and further into the heterooctamer. The cofactor is Mg(2+). It depends on Mn(2+) as a cofactor. As to expression, expressed in brown adipose tissue (BAT).

The protein resides in the mitochondrion. The catalysed reaction is D-threo-isocitrate + NAD(+) = 2-oxoglutarate + CO2 + NADH. With respect to regulation, the heterotetramer and the heterodimer composed of IDH3A and IDH3G subunits can be allosterically activated by citrate (CIT) or/and ADP, and the two activators can act independently or synergistically. The heterodimer composed of IDH3A and IDH3B subunits cannot be allosterically regulated and the allosteric regulation of the heterotetramer is through the IDH3G subunit and not the IDH3B subunit. The IDH3G subunit contains the allosteric site which consists of a CIT-binding site and an ADP-binding site, and the binding of CIT and ADP causes conformational changes at the allosteric site which are transmitted to the active site in the catalytic subunit (IDH3A) through a cascade of conformational changes at the heterodimer interface, leading to stabilization of the isocitrate-binding at the active site and thus activation of the enzyme. ATP can activate the heterotetramer and the heterodimer composed of IDH3A and IDH3G subunits at low concentrations but inhibits their activities at high concentrations, whereas ATP exhibits only inhibitory effect on the heterodimer composed of IDH3A and IDH3B subunits. Catalytic subunit of the enzyme which catalyzes the decarboxylation of isocitrate (ICT) into alpha-ketoglutarate. The heterodimer composed of the alpha (IDH3A) and beta (IDH3B) subunits and the heterodimer composed of the alpha (IDH3A) and gamma (IDH3G) subunits, have considerable basal activity but the full activity of the heterotetramer (containing two subunits of IDH3A, one of IDH3B and one of IDH3G) requires the assembly and cooperative function of both heterodimers. This is Isocitrate dehydrogenase [NAD] subunit alpha, mitochondrial from Rattus norvegicus (Rat).